A 400-amino-acid polypeptide reads, in one-letter code: Phosphoglycerate kinase (400 aa).

Substrate-binding positions include 19–21 (DLN), Arg38, 61–64 (HLGR), Arg124, and Arg161. ATP-binding positions include Lys211, Gly299, Glu330, and 356–359 (GGDS).

Belongs to the phosphoglycerate kinase family. Monomer.

It is found in the cytoplasm. The enzyme catalyses (2R)-3-phosphoglycerate + ATP = (2R)-3-phospho-glyceroyl phosphate + ADP. It participates in carbohydrate degradation; glycolysis; pyruvate from D-glyceraldehyde 3-phosphate: step 2/5. In Parafrankia sp. (strain EAN1pec), this protein is Phosphoglycerate kinase.